Consider the following 614-residue polypeptide: MYELLESINSPEDLRRLDRKELHELARQLRAFLINSVAQTGGHLSSNLGVVELTIALHYVFNTPEDRVVWDVGHQTYPHKILTGRRKDMGNLRRPGGIAGFPRRDESIYDTFGTGHSSTSISAALGMAVAAQKTGSDRHSIAVIGDGAMTAGMAFEALNNAGAMDANILVILNDNDMSISPNVGALTNYLAKLLSGPLYTTVRRSGEKVLGVVPPVREFAKRAEEHVKGMVTPGTLFEEFGFNYIGPIDGHDIDVLITTLRNIRELKGPQFLHIATQKGHGYQPAEDNPGKFHGVGKFDPSNGCSIAQAGKKTYTQVFSDWLVDMAARDERLVGITPAMCDGSGLNAFAEQFPDRFFDVGIAEQHALTFAAGMACDGLKPVVAIYSTFLQRAYDQFIHDIALQNLPVMFAIDRAGLVGADGPTHAGSFDLSYLRCIPNIIIMAPSDENECRQMLYTAYLHDGPSAVRYPRGGGPGATITRDMQLLPIGKGELRRQGSWVAILAFGSMLAPALEAAETLDATVANMRFVKPLDANLINQLASSHTLIVTVEENAVMGGAGAAVMECMQAADIHTPVLCLGLPDMFIEHGVHETMLAECGLNAAGIIAAIEKKLTK.

Residues His74 and 115 to 117 (GHS) each bind thiamine diphosphate. Asp146 lines the Mg(2+) pocket. Thiamine diphosphate-binding positions include 147 to 148 (GA), Asn175, Tyr282, and Glu363. Asn175 serves as a coordination point for Mg(2+).

This sequence belongs to the transketolase family. DXPS subfamily. Homodimer. Mg(2+) serves as cofactor. Thiamine diphosphate is required as a cofactor.

It catalyses the reaction D-glyceraldehyde 3-phosphate + pyruvate + H(+) = 1-deoxy-D-xylulose 5-phosphate + CO2. It functions in the pathway metabolic intermediate biosynthesis; 1-deoxy-D-xylulose 5-phosphate biosynthesis; 1-deoxy-D-xylulose 5-phosphate from D-glyceraldehyde 3-phosphate and pyruvate: step 1/1. In terms of biological role, catalyzes the acyloin condensation reaction between C atoms 2 and 3 of pyruvate and glyceraldehyde 3-phosphate to yield 1-deoxy-D-xylulose-5-phosphate (DXP). This Methylobacillus flagellatus (strain ATCC 51484 / DSM 6875 / VKM B-1610 / KT) protein is 1-deoxy-D-xylulose-5-phosphate synthase.